A 104-amino-acid chain; its full sequence is Pole-localizer protein TmaR (104 aa).

Coiled coils occupy residues 7–34 (IVNQ…NRKR) and 76–96 (SAEI…LTEE).

The protein belongs to the pole-localizer TmaR family.

The protein resides in the cytoplasm. In terms of biological role, pole-localizer protein involved in the regulation of several cellular processes. The sequence is that of Pole-localizer protein TmaR from Vibrio campbellii (strain ATCC BAA-1116).